The primary structure comprises 115 residues: Large ribosomal subunit protein bL19 (115 aa).

This sequence belongs to the bacterial ribosomal protein bL19 family.

Functionally, this protein is located at the 30S-50S ribosomal subunit interface and may play a role in the structure and function of the aminoacyl-tRNA binding site. This Parabacteroides distasonis (strain ATCC 8503 / DSM 20701 / CIP 104284 / JCM 5825 / NCTC 11152) protein is Large ribosomal subunit protein bL19.